The chain runs to 714 residues: Elongation factor G-like protein (714 aa).

One can recognise a tr-type G domain in the interval 21–289; it reads GGVRNVVLVG…VATRGFPSPM (269 aa). Residues 30-37 are G1; sequence GPSGGGKT. 30–37 serves as a coordination point for GTP; it reads GPSGGGKT. Residues 73 to 77 form a G2 region; sequence QRSVG. The segment at 94-97 is G3; it reads DTPG. GTP-binding positions include 94–98 and 148–151; these read DTPGY and TKLD. The segment at 148-151 is G4; the sequence is TKLD. Residues 267-269 form a G5 region; sequence CSS.

The protein belongs to the TRAFAC class translation factor GTPase superfamily. Classic translation factor GTPase family. EF-G/EF-2 subfamily.

The chain is Elongation factor G-like protein from Mycobacterium tuberculosis (strain CDC 1551 / Oshkosh).